The sequence spans 110 residues: Nucleoid-associated protein YE3092 (110 aa).

It belongs to the YbaB/EbfC family. In terms of assembly, homodimer.

It is found in the cytoplasm. It localises to the nucleoid. Binds to DNA and alters its conformation. May be involved in regulation of gene expression, nucleoid organization and DNA protection. The sequence is that of Nucleoid-associated protein YE3092 from Yersinia enterocolitica serotype O:8 / biotype 1B (strain NCTC 13174 / 8081).